An 801-amino-acid polypeptide reads, in one-letter code: MGWLCTKFLSSVSCLILLWVTGSGGIKVLGDPTCFSDYIRTSTCEWQLDSTVDCSSQLLLDYRLLFEFSENLTCTPKNSADTVCVCQMAIEEPIQADTYWLELWSERGQLWQGSFKPSDNVKPPAPDNLTLHTNVSNALLLMWSNPYPSNNFLHKGLICMVNISREDNPAEFKVYNVTYTEPKLSFPVNTLTSGVRYRARVRVLSQSFPGIWSEWSPSITWYNHFQLPLLQRLPLGVSISCICILLFCLTCYFSIIKIKKIWWDQIPTPARSPLAAIIIQDTKVSLWEKQTRSQESTKSRHWKTCLTKLLPCLLEHRVKKERESPKAAKTKPLQSPEKAGWYPAEVSRTVLWPENVHVSVVRCMELFEAPVQNVEEEEDEMVKGDLSMSPENSGGGFQESQADIMARLTENLFSDLLGAENGGVGQSSMAESSSLLPSESGQASTSWACFPTGPSETTCQVTGQQPPHPDPERATGTACTQVPLVISDNPAYRSFSDFSSPAPNPGELASEQKQAGHLEEGDLLSPVDPHSSGPPMQQAESWEQILHMSVLQHGTAGSTPAPTSGYQEFVQAVKQGASQDAGVPGVGPSGDTGYKAFSSLLSSSGVCTDTAAAGTDSGCGGYKPFQNPVPNQSPNSMPLFTFGLDMELPPSPLNSAPPNSTPECLGLELGLKGGTWLKAPPPSEQVPKPFGDDLGLGIVYSSLTCHLCGHLKQHHSQEEDGQIHVVASPGCGCCYDEKSPSLGNLSGTLESCPGEMSQEANLTLAPRTPSNLSGVGKGPGHSPVPSQTTEVPVGTLGVTVS.

Positions 1–25 (MGWLCTKFLSSVSCLILLWVTGSGG) are cleaved as a signal peptide. Over 26–232 (IKVLGDPTCF…NHFQLPLLQR (207 aa)) the chain is Extracellular. C34 and C44 are joined by a disulfide. N-linked (GlcNAc...) asparagine glycosylation is present at N71. An intrachain disulfide couples C74 to C86. Residues 125–223 (APDNLTLHTN…EWSPSITWYN (99 aa)) form the Fibronectin type-III domain. 3 N-linked (GlcNAc...) asparagine glycosylation sites follow: N128, N134, and N162. At S164 the chain carries Phosphoserine. N176 carries N-linked (GlcNAc...) asparagine glycosylation. The short motif at 212 to 216 (WSEWS) is the WSXWS motif element. The chain crosses the membrane as a helical span at residues 233 to 256 (LPLGVSISCICILLFCLTCYFSII). The Cytoplasmic segment spans residues 257 to 801 (KIKKIWWDQI…PVGTLGVTVS (545 aa)). A Box 1 motif motif is present at residues 262–270 (WWDQIPTPA). The tract at residues 424-476 (VGQSSMAESSSLLPSESGQASTSWACFPTGPSETTCQVTGQQPPHPDPERATG) is disordered. Residues 426–444 (QSSMAESSSLLPSESGQAS) show a composition bias toward low complexity. The interval 439–549 (ESGQASTSWA…ESWEQILHMS (111 aa)) is required for IRS1 activation and IL4-induced cell growth. Polar residues predominate over residues 454–465 (PSETTCQVTGQQ). At Y492 the chain carries Phosphotyrosine. The interval 493–515 (RSFSDFSSPAPNPGELASEQKQA) is disordered. Residues 549–644 (SVLQHGTAGS…NSMPLFTFGL (96 aa)) form a required for IL4-induced gene expression region. Phosphotyrosine is present on residues Y566, Y594, and Y622. Residues 698–703 (IVYSSL) carry the ITIM motif motif. Positions 767–801 (RTPSNLSGVGKGPGHSPVPSQTTEVPVGTLGVTVS) are disordered.

The protein belongs to the type I cytokine receptor family. Type 4 subfamily. In terms of assembly, the functional IL4 receptor is formed by initial binding of IL4 to IL4R. Subsequent recruitment to the complex of the common gamma chain, in immune cells, creates a type I receptor and, in non-immune cells, of IL13RA1 forms a type II receptor. IL4R can also interact with the IL13/IL13RA1 complex to form a similar type II receptor. Interacts with PIK3C3. Interacts with the SH2-containing phosphatases, PTPN6/SHIP1, PTPN11/SHIP2 and INPP5D/SHIP. Interacts with JAK1 through a Box 1-containing region; inhibited by SOCS5. Interacts with SOCS5; inhibits IL4 signaling. Interacts with JAK3. Interacts with CLM1. Interacts with IL13RA2. In terms of processing, on IL4 binding, phosphorylated on C-terminal tyrosine residues. Isoform 2 is expressed in kidney, spleen, lung and liver.

The protein resides in the cell membrane. Its subcellular location is the secreted. In terms of biological role, receptor for both interleukin 4 and interleukin 13. Couples to the JAK1/2/3-STAT6 pathway. The IL4 response is involved in promoting Th2 differentiation. The IL4/IL13 responses are involved in regulating IgE production and, chemokine and mucus production at sites of allergic inflammation. In certain cell types, can signal through activation of insulin receptor substrates, IRS1/IRS2. Isoform 2 (soluble form) inhibits IL4-induced spleen cell proliferation. The sequence is that of Interleukin-4 receptor subunit alpha (Il4r) from Rattus norvegicus (Rat).